A 216-amino-acid chain; its full sequence is Uracil phosphoribosyltransferase (216 aa).

5-phospho-alpha-D-ribose 1-diphosphate contacts are provided by residues R85, R110, and 135-143; that span reads DPMVATGYS. Uracil contacts are provided by residues I200 and 205–207; that span reads GDA. D206 lines the 5-phospho-alpha-D-ribose 1-diphosphate pocket.

This sequence belongs to the UPRTase family. It depends on Mg(2+) as a cofactor.

The catalysed reaction is UMP + diphosphate = 5-phospho-alpha-D-ribose 1-diphosphate + uracil. It functions in the pathway pyrimidine metabolism; UMP biosynthesis via salvage pathway; UMP from uracil: step 1/1. With respect to regulation, allosterically activated by GTP. Its function is as follows. Catalyzes the conversion of uracil and 5-phospho-alpha-D-ribose 1-diphosphate (PRPP) to UMP and diphosphate. This is Uracil phosphoribosyltransferase from Burkholderia ambifaria (strain MC40-6).